The following is a 413-amino-acid chain: Aspartate aminotransferase, cytoplasmic (413 aa).

L-aspartate-binding residues include G39 and W141. The residue at position 149 (S149) is a Phosphoserine. N195 lines the L-aspartate pocket. Position 259 is an N6-(pyridoxal phosphate)lysine (K259). The residue at position 318 (K318) is an N6-succinyllysine. R387 is an L-aspartate binding site.

Belongs to the class-I pyridoxal-phosphate-dependent aminotransferase family. As to quaternary structure, homodimer. It depends on pyridoxal 5'-phosphate as a cofactor. As to expression, expressed in neurons of the retina. Localizes to the inner and outer plexiform layers, the inner and outer nuclear layer and the outer segments of photoreceptors.

The protein localises to the cytoplasm. It carries out the reaction L-aspartate + 2-oxoglutarate = oxaloacetate + L-glutamate. The enzyme catalyses L-cysteine + 2-oxoglutarate = 2-oxo-3-sulfanylpropanoate + L-glutamate. The catalysed reaction is (2S)-2-aminobutanoate + 2-oxoglutarate = 2-oxobutanoate + L-glutamate. It catalyses the reaction 3-sulfino-L-alanine + 2-oxoglutarate = 3-sulfinopyruvate + L-glutamate. Its activity is regulated as follows. Inhibited by calcium ions. In terms of biological role, biosynthesis of L-glutamate from L-aspartate or L-cysteine. Important regulator of levels of glutamate, the major excitatory neurotransmitter of the vertebrate central nervous system. Acts as a scavenger of glutamate in brain neuroprotection. The aspartate aminotransferase activity is involved in hepatic glucose synthesis during development and in adipocyte glyceroneogenesis. Using L-cysteine as substrate, regulates levels of mercaptopyruvate, an important source of hydrogen sulfide. Mercaptopyruvate is converted into H(2)S via the action of 3-mercaptopyruvate sulfurtransferase (3MST). Hydrogen sulfide is an important synaptic modulator and neuroprotectant in the brain. This chain is Aspartate aminotransferase, cytoplasmic, found in Mus musculus (Mouse).